We begin with the raw amino-acid sequence, 82 residues long: uncharacterized protein (82 aa).

Residues 55 to 64 are compositionally biased toward polar residues; that stretch reads DQNTAPSTPS. Residues 55-82 form a disordered region; sequence DQNTAPSTPSKILPKRLPSQSNLNNNNN.

This is an uncharacterized protein from Dictyostelium discoideum (Social amoeba).